The following is a 185-amino-acid chain: Homeobox expressed in ES cells 1 (185 aa).

The homeobox DNA-binding region spans 108–167 (GRRPRTAFTQNQIEVLENVFRVNCYPGIDIREDLAQKLNLEEDRIQIWFQNRRAKLKRSH).

Belongs to the ANF homeobox family. In terms of assembly, can form heterodimers with PROP1 in binding to DNA. Interacts with TLE1.

It localises to the nucleus. Required for the normal development of the forebrain, eyes and other anterior structures such as the olfactory placodes and pituitary gland. Possible transcriptional repressor. Binds to the palindromic PIII sequence, 5'-AGCTTGAGTCTAATTGAATTAACTGTAC-3'. HESX1 and PROP1 bind as heterodimers on this palindromic site, and, in vitro, HESX1 can antagonize PROP1 activation. This is Homeobox expressed in ES cells 1 (HESX1) from Pan paniscus (Pygmy chimpanzee).